The chain runs to 408 residues: Cobalt-precorrin-5B C(1)-methyltransferase (408 aa).

This sequence belongs to the CbiD family.

The catalysed reaction is Co-precorrin-5B + S-adenosyl-L-methionine = Co-precorrin-6A + S-adenosyl-L-homocysteine. It participates in cofactor biosynthesis; adenosylcobalamin biosynthesis; cob(II)yrinate a,c-diamide from sirohydrochlorin (anaerobic route): step 6/10. In terms of biological role, catalyzes the methylation of C-1 in cobalt-precorrin-5B to form cobalt-precorrin-6A. This Clostridioides difficile (strain 630) (Peptoclostridium difficile) protein is Cobalt-precorrin-5B C(1)-methyltransferase.